We begin with the raw amino-acid sequence, 25 residues long: Fibrinolytic enzyme large subunit (25 aa).

One can recognise a Peptidase S1 domain in the interval 1–25 (VIGGTNASPGEIPWQLSQQRQSGSW). Residues 1 to 25 (VIGGTNASPGEIPWQLSQQRQSGSW) are disordered. The segment covering 15–25 (QLSQQRQSGSW) has biased composition (polar residues).

It belongs to the peptidase S1 family. In terms of assembly, heterodimer of a large and a small subunit held together by hydrophobic interactions.

Functionally, cleaves the carboxyl side of basic amino acids, small neutral amino acids, and Met residue. It is also a plasminogen activator. The polypeptide is Fibrinolytic enzyme large subunit (Eisenia fetida (Red wiggler worm)).